We begin with the raw amino-acid sequence, 236 residues long: Probable glutathione S-transferase BZ2 (236 aa).

One can recognise a GST N-terminal domain in the interval M1–G80. Glutathione contacts are provided by residues S9, K37, I51, and E64–S65. Positions D92–F221 constitute a GST C-terminal domain.

The protein belongs to the GST superfamily. HSP26 family.

It carries out the reaction RX + glutathione = an S-substituted glutathione + a halide anion + H(+). Its pathway is pigment biosynthesis; anthocyanin biosynthesis. The polypeptide is Probable glutathione S-transferase BZ2 (BZ2) (Zea mays (Maize)).